The chain runs to 204 residues: Urease accessory protein UreG (204 aa).

Residue 11–18 participates in GTP binding; sequence GPVGAGKT.

The protein belongs to the SIMIBI class G3E GTPase family. UreG subfamily. In terms of assembly, homodimer. UreD, UreF and UreG form a complex that acts as a GTP-hydrolysis-dependent molecular chaperone, activating the urease apoprotein by helping to assemble the nickel containing metallocenter of UreC. The UreE protein probably delivers the nickel.

It localises to the cytoplasm. In terms of biological role, facilitates the functional incorporation of the urease nickel metallocenter. This process requires GTP hydrolysis, probably effectuated by UreG. In Staphylococcus aureus (strain Mu3 / ATCC 700698), this protein is Urease accessory protein UreG.